Reading from the N-terminus, the 180-residue chain is Ribulose bisphosphate carboxylase small subunit, chloroplastic 2 (180 aa).

The N-terminal 56 residues, 1 to 56 (MASSVISSAAVATRSNVTQASMVAPFTGLKSSATFPVTKKQNLDITSIASNGGRVS), are a transit peptide targeting the chloroplast.

Belongs to the RuBisCO small chain family. As to quaternary structure, heterohexadecamer of 8 large and 8 small subunits. In terms of assembly, (Microbial infection) Binds to tobamovirus movement protein; this interaction seems required for viral systemic movement.

The protein localises to the plastid. The protein resides in the chloroplast. It is found in the cell junction. Its subcellular location is the plasmodesma. RuBisCO catalyzes two reactions: the carboxylation of D-ribulose 1,5-bisphosphate, the primary event in carbon dioxide fixation, as well as the oxidative fragmentation of the pentose substrate. Both reactions occur simultaneously and in competition at the same active site. Although the small subunit is not catalytic it is essential for maximal activity. Involved in antiviral defenses. The protein is Ribulose bisphosphate carboxylase small subunit, chloroplastic 2 of Solanum lycopersicum (Tomato).